The chain runs to 753 residues: MRVLITNDDGPLSDQFSPYIRPFIQHIKRNYPEWKITVCVPHVQKSWVGKAHLAGKNLTAQFIYSKVDAEDNTFWGPFIQPQIRSENSKLPYVLNAEIPKDTIEWILIDGTPASCANIGLHLLSNEPFDLVLSGPNVGRNTSAAYITSSGTVGGAMESVITGNTKAIAISWAYFNGLKNVSPLLMEKASKRSLDVIKHLVKNWDPKTDLYSINIPLVESLSDDTKVYYAPIWENRWIPIFNGPHINLENSFAEIEDGNESSSISFNWAPKFGAHKDSIHYMDEYKDRTVLTDAEVIESEMISVTPMKATFKGVNHLLGELKLTEEENNLSKTNNLIVVSIDPMEYIYKPLTHALKKYLPQVEIVSNLPEFDNGGCEKEMKVFHYGDYEQLDMDKLMELPNNYFTNSYIYRKALIRKHFLSHTIQTYTAKNPESILKKAYLESFTIDLDYAEFLDDALDENWELRQELENESQDKWWIVKPSMSDKGQGIRVFKTIEDLQAIFDSFDDEDSEAEESGNDDDADDVNGEFMDNNKVNISQLRHFIIQEYLTNPLLLASMDNRKFHIRCYVVCRGDLQVFVYDRMLALFAAKPFVPLDPYAYSVTDLKDLECHLTNTCLQSKKKDKDSSVLEFDSIEEIPNERKSNIKEQIHSITNDVFLAAVNVNRLNFQPLPNAFETYGVDFLIDSNYEVKLLEINAFPDFKQTGKDLKNLIDELFDDTVKYCVTPIFNENRNKTDDETDPNFVKVIDYTSNGW.

Positions 343–734 (MEYIYKPLTH…PIFNENRNKT (392 aa)) constitute a TTL domain.

It belongs to the tubulin--tyrosine ligase family. The cofactor is Mg(2+). Requires K(+) as cofactor.

It is found in the cytoplasm. The protein resides in the P-body. It carries out the reaction C-terminal L-alpha-aminoacyl-L-glutamyl-L-glutamyl-[tubulin] + L-tyrosine + ATP = C-terminal L-alpha-aminoacyl-L-glutamyl-L-glutamyl-L-tyrosyl-[tubulin] + ADP + phosphate + H(+). Its function is as follows. Probable P-body-associated tubulin--tyrosine ligase. This is Probable tubulin--tyrosine ligase PBY1 (PBY1) from Saccharomyces cerevisiae (strain ATCC 204508 / S288c) (Baker's yeast).